The primary structure comprises 516 residues: MSSSSYNTSVIPSSSSSAQPFFITSSGTGDNDFNRKDTFMSMIQQPNSSAPPPKKRRNQPGNPNPDAEVVALSPKTLMATNRFICDVCNKGFQREQNLQLHRRGHNLPWKLKQKSTKEVKRKVYLCPEPTCVHHDPSRALGDLTGIKKHYYRKHGEKKWKCEKCSKRYAVQSDWKAHSKTCGTKEYRCDCGTIFSRRDSYITHRAFCDALIQETARNPTVSFTSMTAASSGVGSGGIYGRLGGGSALSHHHLSDHPNFGFNPLVGYNLNIASSDNRRDFIPQSSNPNFLIQSASSQGMLNTTPNNNNQSFMNQHGLIQFDPVDNINLKSSGTNNSFFNLGFFQENTKNSETSLPSLYSTDVLVHHREENLNAGSNVSATALLQKATQMGSVTSNDPSALFRGLASSSNSSSVIANHFGGGRIMENDNNGNLQGLMNSLAAVNGGGGSGGSIFDVQFGDNGNMSGSDKLTLDFLGVGGMVRNVNRGGGGGGRGSARGGVSLDGEAKFPEQNYPFGRG.

Residues 1–26 (MSSSSYNTSVIPSSSSSAQPFFITSS) show a composition bias toward low complexity. The tract at residues 1–68 (MSSSSYNTSV…QPGNPNPDAE (68 aa)) is disordered. Residues 1-70 (MSSSSYNTSV…GNPNPDAEVV (70 aa)) constitute a chloroplast transit peptide. At Ser-73 the chain carries Phosphoserine. C2H2-type zinc fingers lie at residues 83–105 (FICD…RRGH) and 124–154 (YLCP…YRKH). The short motif at 146-153 (IKKHYYRK) is the Nuclear localization signal element. The C2H2-type 2; degenerate zinc finger occupies 159–182 (WKCEKCSKRYAVQSDWKAHSKTCG). Zn(2+) is bound by residues Cys-161, Cys-164, His-177, Cys-181, Cys-188, Cys-190, His-203, and Cys-207. Residues 186 to 209 (YRCDCGTIFSRRDSYITHRAFCDA) form a CCHC-type 2; atypical zinc finger. An SHR-binding region spans residues 196–208 (RRDSYITHRAFCD). Positions 483–516 (NRGGGGGGRGSARGGVSLDGEAKFPEQNYPFGRG) are disordered. Residues 484-495 (RGGGGGGRGSAR) are compositionally biased toward gly residues.

Binds to RGA and SCL3 competitively in the nucleus.

The protein resides in the plastid. It localises to the chloroplast. The protein localises to the nucleus. Functionally, transcription factor that may act a transcriptional activator of nuclear-encoded photosynthetic gene expression. Binds DNA via its zinc fingers. Recognizes and binds to SCL3 promoter sequence 5'-AGACAA-3' to promote its expression when in complex with RGA. This Arabidopsis thaliana (Mouse-ear cress) protein is Protein indeterminate-domain 4, chloroplastic.